The primary structure comprises 198 residues: LIM domain-containing protein D (198 aa).

The 61-residue stretch at 5–65 (GKCTRCQKTV…ANHYPVGGLS (61 aa)) folds into the LIM zinc-binding domain.

Its subcellular location is the cell projection. It is found in the pseudopodium. It localises to the cytoplasm. The protein resides in the cell cortex. The protein localises to the cytoskeleton. Binds to F-actin and may modulate the chemotactic response during early development and contribute to the maintenance of the strength of the actin cytoskeleton. This is LIM domain-containing protein D (limD) from Dictyostelium discoideum (Social amoeba).